We begin with the raw amino-acid sequence, 262 residues long: Indole-3-glycerol phosphate synthase (262 aa).

It belongs to the TrpC family.

It carries out the reaction 1-(2-carboxyphenylamino)-1-deoxy-D-ribulose 5-phosphate + H(+) = (1S,2R)-1-C-(indol-3-yl)glycerol 3-phosphate + CO2 + H2O. Its pathway is amino-acid biosynthesis; L-tryptophan biosynthesis; L-tryptophan from chorismate: step 4/5. The sequence is that of Indole-3-glycerol phosphate synthase from Thiobacillus denitrificans (strain ATCC 25259 / T1).